Consider the following 485-residue polypeptide: Aprataxin and PNK-like factor (485 aa).

The 84-residue stretch at 1–84 folds into the FHA-like domain; that stretch reads MSGGFELQPQ…CVLSTHSEME (84 aa). A Phosphoserine; by ATM modification is found at serine 92. The interval 103–156 is disordered; that stretch reads EIPKSSSADLPDKTPSAPRRERSTETAKPQAAANNMSFIGESRDLSKQQPNPSE. Serine 125 carries the phosphoserine modification. The short motif at 157-166 is the KBM element; the sequence is RKRILPAWML. The tract at residues 206-348 is disordered; it reads GKKRLISSGS…VPNGSEENKV (143 aa). Polar residues-rich tracts occupy residues 212 to 223, 237 to 249, and 286 to 309; these read SSGSSESTSAKQ, SIISSKEMPQSFS, and KGSSNEDSTARSCSESYSSTQSKS. Positions 310–319 are enriched in basic and acidic residues; sequence FCDKPQKSHP. A glycoprotein is bound by residues arginine 350, tyrosine 355, tyrosine 360, and arginine 361. The segment at 351–372 adopts a PBZ-type 1 zinc-finger fold; sequence TSCMYGANCYRKNPVHFQHFSH. Residues 380–390 are flexible linker; it reads GVNITCQDEAD. A PBZ-type 2 zinc finger spans residues 393–414; sequence PECPYGASCYRKNPQHKIEYRH. 3 residues coordinate a glycoprotein: tyrosine 397, tyrosine 402, and arginine 403. A disordered region spans residues 420-470; it reads RSISDEDDNVGQPNEYNLNDSFIDDEEEEYEPTDEDSDWEPEKEDLEKEDM. Positions 441–469 are enriched in acidic residues; it reads FIDDEEEEYEPTDEDSDWEPEKEDLEKED. An NAP1L motif motif is present at residues 449 to 473; the sequence is YEPTDEDSDWEPEKEDLEKEDMEGL.

This sequence belongs to the APLF family. Interacts with LIG4. Interacts with PARP1. Interacts with XRCC4. Interacts (via KBM motif) with XRCC5 and XRCC6; promoting recruitment to DNA damage sites. Interacts with XRCC1. Interacts (via C-terminal disordered region) with histones; interacts with histone H2A, H2B and H3-H4. In terms of processing, poly-ADP-ribosylated. In addition to binding non covalently poly-ADP-ribose via its PBZ-type zinc fingers, the protein is also covalently poly-ADP-ribosylated by PARP1. Post-translationally, phosphorylated in an ATM-dependent manner upon double-strand DNA break.

It is found in the nucleus. Its subcellular location is the chromosome. The protein resides in the cytoplasm. The protein localises to the cytosol. In terms of biological role, histone chaperone involved in single-strand and double-strand DNA break repair. Recruited to sites of DNA damage through interaction with branched poly-ADP-ribose chains, a polymeric post-translational modification synthesized transiently at sites of chromosomal damage to accelerate DNA strand break repair reactions. Following recruitment to DNA damage sites, acts as a histone chaperone that mediates histone eviction during DNA repair and promotes recruitment of histone variant MACROH2A1. Also has a nuclease activity: displays apurinic-apyrimidinic (AP) endonuclease and 3'-5' exonuclease activities in vitro. Also able to introduce nicks at hydroxyuracil and other types of pyrimidine base damage. Together with PARP3, promotes the retention of the LIG4-XRCC4 complex on chromatin and accelerate DNA ligation during non-homologous end-joining (NHEJ). Also acts as a negative regulator of cell pluripotency by promoting histone exchange. Required for the embryo implantation during the epithelial to mesenchymal transition in females. This is Aprataxin and PNK-like factor (APLF) from Bos taurus (Bovine).